The sequence spans 555 residues: HERV-H_2q24.1 provirus ancestral Env polyprotein (555 aa).

The signal sequence occupies residues methionine 1 to proline 35. At leucine 36–valine 515 the chain is on the extracellular side. Asparagine 47 carries an N-linked (GlcNAc...) asparagine glycan. The CXXC motif lies at cysteine 64 to cysteine 67. Residues asparagine 222, asparagine 265, asparagine 283, asparagine 352, and asparagine 370 are each glycosylated (N-linked (GlcNAc...) asparagine). A fusion peptide region spans residues valine 388–serine 408. An N-linked (GlcNAc...) asparagine glycan is attached at asparagine 475. Residues leucine 516 to phenylalanine 536 traverse the membrane as a helical segment. At histidine 537–isoleucine 555 the chain is on the cytoplasmic side.

It belongs to the gamma type-C retroviral envelope protein family. HERV class-I H env subfamily. As to quaternary structure, the surface (SU) and transmembrane (TM) proteins form a heterodimer. SU and TM are attached by noncovalent interactions or by a labile interchain disulfide bond. In terms of processing, specific enzymatic cleavages in vivo yield the mature SU and TM proteins. Low expression in testis.

The protein resides in the virion. Its subcellular location is the cell membrane. In terms of biological role, retroviral envelope proteins mediate receptor recognition and membrane fusion during early infection. Endogenous envelope proteins may have kept, lost or modified their original function during evolution. This endogenous envelope protein has lost its original fusogenic properties. Its function is as follows. SU mediates receptor recognition. Functionally, TM anchors the envelope heterodimer to the viral membrane through one transmembrane domain. The other hydrophobic domain, called fusion peptide, mediates fusion of the viral membrane with the target cell membrane. In Homo sapiens (Human), this protein is HERV-H_2q24.1 provirus ancestral Env polyprotein.